The chain runs to 90 residues: CRISPR-associated endonuclease Cas2 2 (90 aa).

Asp11 provides a ligand contact to Mg(2+).

Belongs to the CRISPR-associated endoribonuclease Cas2 protein family. Homodimer, forms a heterotetramer with a Cas1 homodimer. The cofactor is Mn(2+). Mg(2+) is required as a cofactor.

Inhibited by EDTA and at pH 6.0. CRISPR (clustered regularly interspaced short palindromic repeat), is an adaptive immune system that provides protection against mobile genetic elements (viruses, transposable elements and conjugative plasmids). CRISPR clusters contain sequences complementary to antecedent mobile elements and target invading nucleic acids. CRISPR clusters are transcribed and processed into CRISPR RNA (crRNA). Involved in the integration of spacer DNA into the CRISPR cassette. Functions as a dsDNA endonuclease and as a weak ssRNase. The polypeptide is CRISPR-associated endonuclease Cas2 2 (cas2b) (Thermus thermophilus (strain ATCC BAA-163 / DSM 7039 / HB27)).